The primary structure comprises 143 residues: Small ribosomal subunit protein bS6 (143 aa).

A disordered region spans residues Q100–A143. Over residues K105–D121 the composition is skewed to basic and acidic residues. Positions D126–A143 are enriched in low complexity.

It belongs to the bacterial ribosomal protein bS6 family.

In terms of biological role, binds together with bS18 to 16S ribosomal RNA. In Xylella fastidiosa (strain M12), this protein is Small ribosomal subunit protein bS6.